Consider the following 205-residue polypeptide: Holliday junction branch migration complex subunit RuvA (205 aa).

The segment at 1–64 is domain I; the sequence is MIGRLNGILV…EDAQLLFGFN (64 aa). A domain II region spans residues 65 to 143; it reads NKVERALFRE…NWGNDLFTPF (79 aa). Positions 144-156 are flexible linker; that stretch reads SDSAVIEPFSDAT. The segment at 157 to 205 is domain III; the sequence is IANNAADDAVSALVSLGYKLPQAQKAVKSVSKPDMSTEVLIKESLKSML.

This sequence belongs to the RuvA family. Homotetramer. Forms an RuvA(8)-RuvB(12)-Holliday junction (HJ) complex. HJ DNA is sandwiched between 2 RuvA tetramers; dsDNA enters through RuvA and exits via RuvB. An RuvB hexamer assembles on each DNA strand where it exits the tetramer. Each RuvB hexamer is contacted by two RuvA subunits (via domain III) on 2 adjacent RuvB subunits; this complex drives branch migration. In the full resolvosome a probable DNA-RuvA(4)-RuvB(12)-RuvC(2) complex forms which resolves the HJ.

It is found in the cytoplasm. Its function is as follows. The RuvA-RuvB-RuvC complex processes Holliday junction (HJ) DNA during genetic recombination and DNA repair, while the RuvA-RuvB complex plays an important role in the rescue of blocked DNA replication forks via replication fork reversal (RFR). RuvA specifically binds to HJ cruciform DNA, conferring on it an open structure. The RuvB hexamer acts as an ATP-dependent pump, pulling dsDNA into and through the RuvAB complex. HJ branch migration allows RuvC to scan DNA until it finds its consensus sequence, where it cleaves and resolves the cruciform DNA. The chain is Holliday junction branch migration complex subunit RuvA from Pseudoalteromonas translucida (strain TAC 125).